The chain runs to 151 residues: Transmembrane protein 239 (151 aa).

A run of 3 helical transmembrane segments spans residues 61–81, 85–105, and 116–138; these read LWGLEGTLYLLLALMLCHALF, SYLLSSLWPVVAVMWSHLLPA, and ALLFAASFLLLFSTLLSLVGLLT.

It localises to the membrane. This is Transmembrane protein 239 (Tmem239) from Mus musculus (Mouse).